The following is a 271-amino-acid chain: Zinc finger CCHC domain-containing protein 9 (271 aa).

The interval 1 to 40 is disordered; the sequence is MTRWARVSTTYNKRPLPATSWEDMKKGSFEGTSQNLPKRK. A Phosphoserine modification is found at serine 48. 4 CCHC-type zinc fingers span residues 128–145, 155–172, 184–201, and 211–228; these read MVCF…DCPA, GICY…KCKA, AKCF…SCPD, and GGCK…DCPE.

It is found in the nucleus. It localises to the nucleolus. In terms of biological role, may down-regulate transcription mediated by NF-kappa-B and the serum response element. This chain is Zinc finger CCHC domain-containing protein 9 (ZCCHC9), found in Homo sapiens (Human).